Here is a 282-residue protein sequence, read N- to C-terminus: Protease HtpX homolog (282 aa).

The next 2 membrane-spanning stretches (helical) occupy residues 6-26 and 28-48; these read TFIL…LIGG and QGVI…YFFS. Position 130 (histidine 130) interacts with Zn(2+). The active site involves glutamate 131. Residue histidine 134 participates in Zn(2+) binding. Transmembrane regions (helical) follow at residues 140–160 and 177–197; these read ILIG…ANFA and ILMI…QMAI. Glutamate 202 provides a ligand contact to Zn(2+).

It belongs to the peptidase M48B family. It depends on Zn(2+) as a cofactor.

The protein resides in the cell inner membrane. In Campylobacter hominis (strain ATCC BAA-381 / DSM 21671 / CCUG 45161 / LMG 19568 / NCTC 13146 / CH001A), this protein is Protease HtpX homolog.